The chain runs to 417 residues: MKRVAVLSVHTSPLEQPGTGDAGGMNVYVVQTATAMARRGVEVEIFTRATSSELPPVAELAPGVKVRHVVAGPFSGLEKEELPGQLCAFTAGVLRAEARHEPGHYDVVHSHYWLSGQVGWLARERWGVPLVHTAHTLAKVKNLALADSDAPEPRMRVIGEEQVVAEADRLIANTDVEADQLTGLYAADPAKVLVVPPGVDLGRFTPGDRGEARRSLGLAPDALVLAFVGRIQPLKAPDVLVRATAALLERDPGLRSRLVVLVVGGPSGSGMRTPDELVGLARSLGVADVVRFLPPQGGGSLAQVYRAADAVAVPSHNESFGLVALEAQACGTPVVAAAVGGLPVAVRDGVTGLLVAGHRTSDWADALSRIALAPGLREALAGNAVGHARGFSWDRTTESLLAAYGQARDVFREEVYA.

His-10 lines the 1D-myo-inositol 3-phosphate pocket. Residues 16 to 17 (QP) and Gly-24 contribute to the UDP-N-acetyl-alpha-D-glucosamine site. Residues 21–26 (DAGGMN), Lys-79, Tyr-112, Thr-136, and Arg-156 each bind 1D-myo-inositol 3-phosphate. The UDP-N-acetyl-alpha-D-glucosamine site is built by Arg-230, Lys-235, and Gln-296. The Mg(2+) site is built by Tyr-305, Arg-306, and Ala-308. 2 residues coordinate UDP-N-acetyl-alpha-D-glucosamine: Glu-318 and Glu-326. Thr-332 contacts Mg(2+).

The protein belongs to the glycosyltransferase group 1 family. MshA subfamily. As to quaternary structure, homodimer.

It carries out the reaction 1D-myo-inositol 3-phosphate + UDP-N-acetyl-alpha-D-glucosamine = 1D-myo-inositol 2-acetamido-2-deoxy-alpha-D-glucopyranoside 3-phosphate + UDP + H(+). In terms of biological role, catalyzes the transfer of a N-acetyl-glucosamine moiety to 1D-myo-inositol 3-phosphate to produce 1D-myo-inositol 2-acetamido-2-deoxy-glucopyranoside 3-phosphate in the mycothiol biosynthesis pathway. This Actinosynnema mirum (strain ATCC 29888 / DSM 43827 / JCM 3225 / NBRC 14064 / NCIMB 13271 / NRRL B-12336 / IMRU 3971 / 101) protein is D-inositol 3-phosphate glycosyltransferase.